Consider the following 235-residue polypeptide: Pyridoxine 5'-phosphate synthase (235 aa).

Position 6 (N6) interacts with 3-amino-2-oxopropyl phosphate. 8–9 (DH) contacts 1-deoxy-D-xylulose 5-phosphate. R17 contributes to the 3-amino-2-oxopropyl phosphate binding site. Residue H42 is the Proton acceptor of the active site. Positions 44 and 49 each coordinate 1-deoxy-D-xylulose 5-phosphate. E69 acts as the Proton acceptor in catalysis. Residue T99 participates in 1-deoxy-D-xylulose 5-phosphate binding. H188 (proton donor) is an active-site residue. Residues G189 and 210–211 (GH) contribute to the 3-amino-2-oxopropyl phosphate site.

The protein belongs to the PNP synthase family. Homooctamer; tetramer of dimers.

It localises to the cytoplasm. It catalyses the reaction 3-amino-2-oxopropyl phosphate + 1-deoxy-D-xylulose 5-phosphate = pyridoxine 5'-phosphate + phosphate + 2 H2O + H(+). Its pathway is cofactor biosynthesis; pyridoxine 5'-phosphate biosynthesis; pyridoxine 5'-phosphate from D-erythrose 4-phosphate: step 5/5. In terms of biological role, catalyzes the complicated ring closure reaction between the two acyclic compounds 1-deoxy-D-xylulose-5-phosphate (DXP) and 3-amino-2-oxopropyl phosphate (1-amino-acetone-3-phosphate or AAP) to form pyridoxine 5'-phosphate (PNP) and inorganic phosphate. This chain is Pyridoxine 5'-phosphate synthase, found in Wolbachia pipientis subsp. Culex pipiens (strain wPip).